The sequence spans 192 residues: Phosphoheptose isomerase (192 aa).

In terms of domain architecture, SIS spans 35 to 192 (LIETLENQGK…CIERHFAHKN (158 aa)). Position 50–52 (50–52 (NGG)) interacts with substrate. Zn(2+) is bound by residues histidine 59 and glutamate 63. Substrate contacts are provided by residues glutamate 63, 92-93 (ND), 118-120 (STS), serine 123, and glutamine 170. Glutamine 170 and histidine 178 together coordinate Zn(2+).

This sequence belongs to the SIS family. GmhA subfamily. In terms of assembly, homotetramer. The cofactor is Zn(2+).

It localises to the cytoplasm. It carries out the reaction 2 D-sedoheptulose 7-phosphate = D-glycero-alpha-D-manno-heptose 7-phosphate + D-glycero-beta-D-manno-heptose 7-phosphate. Its pathway is carbohydrate biosynthesis; D-glycero-D-manno-heptose 7-phosphate biosynthesis; D-glycero-alpha-D-manno-heptose 7-phosphate and D-glycero-beta-D-manno-heptose 7-phosphate from sedoheptulose 7-phosphate: step 1/1. The protein operates within bacterial outer membrane biogenesis; LPS core biosynthesis. Functionally, catalyzes the isomerization of sedoheptulose 7-phosphate in D-glycero-D-manno-heptose 7-phosphate. This is Phosphoheptose isomerase from Helicobacter pylori (strain ATCC 700392 / 26695) (Campylobacter pylori).